Reading from the N-terminus, the 569-residue chain is uncharacterized protein (569 aa).

The N-terminal stretch at methionine 1–alanine 21 is a signal peptide. The Extracellular portion of the chain corresponds to lysine 22–lysine 530. Residues alanine 531 to phenylalanine 551 form a helical membrane-spanning segment. Topologically, residues tyrosine 552–glycine 569 are cytoplasmic.

The protein resides in the cell membrane. This is an uncharacterized protein from Bacillus subtilis (strain 168).